The following is a 356-amino-acid chain: Glutamine synthetase PR-1 (356 aa).

The region spanning 19–99 (VIAEYIWIGG…VICDAYTPAG (81 aa)) is the GS beta-grasp domain. The disordered stretch occupies residues 41–64 (PGPVKNPSELPKWNYDGSSTGQAP). Residues 106-356 (KRHNAAKIFS…IADTTILWKP (251 aa)) form the GS catalytic domain.

It belongs to the glutamine synthetase family. Homooctamer. In terms of tissue distribution, roots.

Its subcellular location is the cytoplasm. The catalysed reaction is L-glutamate + NH4(+) + ATP = L-glutamine + ADP + phosphate + H(+). This is Glutamine synthetase PR-1 from Phaseolus vulgaris (Kidney bean).